A 512-amino-acid chain; its full sequence is MALTATATTRGGSALPNSCLQTPKFQSLQKPTFISSFPTNKKTKPRTKHISAVQSPPSTTKWNLESWKTKPAFQLPDYPDKVELESVLKTLSTYPPIVFAGEARNLEEKLGEAALGNAFLLQGGDCAESFKEFSANNIRDTFRVMLQMGVVLMFGGQMPVIKVGRMAGQFAKPRSDPFEEKDGVKLPSYRGDNVNGDAFDEKSRIPDPHRMVRAYTQSVATLNLLRAFASGGYAAMQRVNQWNLDFTDQSEQGDRYRELAHRVDEAMGFMTAAGLTVDHTIMTTTDFWTSHECLLLPYEQALTREDSTSGLYYDCSAHMIWVGERTRQLDGAHVEFLRGIANPLGIKVSHKMDPDELVKLIDILNPQNKPGRITVITRMGADNMRVKLPHLIRAVRGAGQIVTWVSDPMHGNTTKAPCGLKTRSFDSIRAELRAFFDVHEQEGSYPGGVHLEMTGQNVTECVGGSRTITYNDLSSRYHTHCDPRLNASQALELAFAIAERLRRRRLGPKFSL.

The N-terminal 57 residues, 1–57 (MALTATATTRGGSALPNSCLQTPKFQSLQKPTFISSFPTNKKTKPRTKHISAVQSPP), are a transit peptide targeting the chloroplast. Residues 37–57 (FPTNKKTKPRTKHISAVQSPP) are disordered. Cysteine 126 provides a ligand contact to Mn(2+). Substrate-binding positions include arginine 165, 324-325 (ER), lysine 347, and arginine 378. Mn(2+)-binding residues include histidine 410, glutamate 452, and aspartate 482.

The protein belongs to the class-II DAHP synthase family. In terms of assembly, homodimer. Mn(2+) is required as a cofactor. Mostly expressed in leaves and stems, and, to a lower extent, in roots, stigmas, anthers, petal tubes, petal limbs and sepals.

The protein resides in the plastid. Its subcellular location is the chloroplast. It carries out the reaction D-erythrose 4-phosphate + phosphoenolpyruvate + H2O = 7-phospho-2-dehydro-3-deoxy-D-arabino-heptonate + phosphate. The protein operates within metabolic intermediate biosynthesis; chorismate biosynthesis; chorismate from D-erythrose 4-phosphate and phosphoenolpyruvate: step 1/7. Its function is as follows. Involved in the production of volatile organic compounds (VOCs). Catalyzes an aldol-like condensation reaction between phosphoenolpyruvate (PEP) and D-erythrose 4-phosphate (E4P) to generate 3-deoxy-D-arabino-heptulosonate 7-phosphate (DAH7P) and inorganic phosphate. This chain is Phospho-2-dehydro-3-deoxyheptonate aldolase 2, chloroplastic, found in Petunia hybrida (Petunia).